Consider the following 569-residue polypeptide: Oxygen-dependent choline dehydrogenase (569 aa).

FAD is bound at residue 9 to 38; the sequence is DYVIIGGGSAGSVLGNRLSEDKDKEVLVLE. His475 acts as the Proton acceptor in catalysis.

The protein belongs to the GMC oxidoreductase family. FAD is required as a cofactor.

The catalysed reaction is choline + A = betaine aldehyde + AH2. The enzyme catalyses betaine aldehyde + NAD(+) + H2O = glycine betaine + NADH + 2 H(+). It functions in the pathway amine and polyamine biosynthesis; betaine biosynthesis via choline pathway; betaine aldehyde from choline (cytochrome c reductase route): step 1/1. Involved in the biosynthesis of the osmoprotectant glycine betaine. Catalyzes the oxidation of choline to betaine aldehyde and betaine aldehyde to glycine betaine at the same rate. The chain is Oxygen-dependent choline dehydrogenase from Staphylococcus aureus (strain MSSA476).